The following is a 371-amino-acid chain: MSIRIAINGYGRIGRSVVRALYENNRQDEMKVVVINELAEPSAIAHLTQYDSTHGRFPFPVNLQNNLLKIKNDDIHLVRFSELADLPWHEHDIDIVLDCTGIYGSRADADAHIAAGAKKVIFSHPADPDVDATVVYGINHQQLTGDETFISGASCTTNCMVPVIDTLDKHFAIKCGTITTIHSAMNDQPVIDAYHSDLRRTRAASQSIIPVDTKLAAGIERILPKFANKFEAIAVRVPTINVTAMDLSITVSKDVTIQEINDCLLKASETNLKDILGYTEAPLVSIDFNHDPRSCIIDGTQTRVSDGNLVKLLVWCDNEWGFANRLLDTSFYLANLAEQKRLQSTETVKSLEDTGISNEIKDELQDRRKII.

12–13 is a binding site for NAD(+); that stretch reads RI. Residues 154-156, Arg-200, 213-214, and Arg-236 each bind substrate; these read SCT and TK. Cys-155 serves as the catalytic Nucleophile. NAD(+) is bound at residue Asn-318.

This sequence belongs to the glyceraldehyde-3-phosphate dehydrogenase family. Epd subfamily. As to quaternary structure, homotetramer.

Its subcellular location is the cytoplasm. The enzyme catalyses D-erythrose 4-phosphate + NAD(+) + H2O = 4-phospho-D-erythronate + NADH + 2 H(+). The protein operates within cofactor biosynthesis; pyridoxine 5'-phosphate biosynthesis; pyridoxine 5'-phosphate from D-erythrose 4-phosphate: step 1/5. In terms of biological role, catalyzes the NAD-dependent conversion of D-erythrose 4-phosphate to 4-phosphoerythronate. The protein is D-erythrose-4-phosphate dehydrogenase of Psychromonas ingrahamii (strain DSM 17664 / CCUG 51855 / 37).